Here is a 592-residue protein sequence, read N- to C-terminus: Aspartate--tRNA(Asp/Asn) ligase (592 aa).

An L-aspartate-binding site is contributed by glutamate 175. The segment at 199–202 (QLFK) is aspartate. Position 221 (arginine 221) interacts with L-aspartate. ATP-binding positions include 221-223 (RDE) and glutamine 230. Histidine 450 contributes to the L-aspartate binding site. Residue glutamate 483 coordinates ATP. Residue arginine 490 participates in L-aspartate binding. 535–538 (GLDR) is an ATP binding site.

This sequence belongs to the class-II aminoacyl-tRNA synthetase family. Type 1 subfamily. As to quaternary structure, homodimer.

The protein localises to the cytoplasm. It carries out the reaction tRNA(Asx) + L-aspartate + ATP = L-aspartyl-tRNA(Asx) + AMP + diphosphate. In terms of biological role, aspartyl-tRNA synthetase with relaxed tRNA specificity since it is able to aspartylate not only its cognate tRNA(Asp) but also tRNA(Asn). Reaction proceeds in two steps: L-aspartate is first activated by ATP to form Asp-AMP and then transferred to the acceptor end of tRNA(Asp/Asn). This chain is Aspartate--tRNA(Asp/Asn) ligase, found in Acinetobacter baumannii (strain ATCC 17978 / DSM 105126 / CIP 53.77 / LMG 1025 / NCDC KC755 / 5377).